Here is a 263-residue protein sequence, read N- to C-terminus: Small ribosomal subunit protein uS2 (263 aa).

Residues K223–L249 are compositionally biased toward basic and acidic residues. A disordered region spans residues K223 to E263. The span at D250–E263 shows a compositional bias: acidic residues.

Belongs to the universal ribosomal protein uS2 family.

This is Small ribosomal subunit protein uS2 from Campylobacter jejuni subsp. jejuni serotype O:6 (strain 81116 / NCTC 11828).